The following is a 412-amino-acid chain: Alpha-1-antitrypsin 1-3 (412 aa).

Positions 1 to 24 (MTPSISWGLLLLAGLCCLVPSFLA) are cleaved as a signal peptide. Residues Asn-64, Asn-101, and Asn-265 are each glycosylated (N-linked (GlcNAc...) asparagine). Positions 368 to 387 (AVTVLLAVPYSMPPILRFDH) are RCL.

It belongs to the serpin family.

Its subcellular location is the secreted. Functionally, inhibitor of serine proteases. Can inhibit trypsin and chymotrypsin; relatively ineffective against elastase. This Mus musculus (Mouse) protein is Alpha-1-antitrypsin 1-3 (Serpina1c).